Consider the following 242-residue polypeptide: MSGFFITATDTEVGKTVVAGALAGVFRELGYNIGVYKALQSGHVASNPEGDAARLKVLSGVPIKEDEICPYSIEEPLAPRLAMKRAGRAVTLKDIIHHYNERLKEFNSLFVEGAGGLAVPYTEDALVIDFAKELQLPLIVVARPTLGTVNHTVLTIAYAKAHGLTVAGVILSGCKECEMERVQENKVMIEELSGVPVLGLLPFFEGEFTKEEVLESAKEYIMISKLEEFIRNESTVAHTSSN.

12 to 17 (EVGKTV) contributes to the ATP binding site. Thr16 is a binding site for Mg(2+). Lys37 is an active-site residue. Position 41 (Ser41) interacts with substrate. ATP contacts are provided by residues Asp51 and 112–115 (EGAG). Residues Asp51 and Glu112 each coordinate Mg(2+).

It belongs to the dethiobiotin synthetase family. Homodimer. Mg(2+) is required as a cofactor.

Its subcellular location is the cytoplasm. The catalysed reaction is (7R,8S)-7,8-diammoniononanoate + CO2 + ATP = (4R,5S)-dethiobiotin + ADP + phosphate + 3 H(+). It participates in cofactor biosynthesis; biotin biosynthesis; biotin from 7,8-diaminononanoate: step 1/2. Functionally, catalyzes a mechanistically unusual reaction, the ATP-dependent insertion of CO2 between the N7 and N8 nitrogen atoms of 7,8-diaminopelargonic acid (DAPA, also called 7,8-diammoniononanoate) to form a ureido ring. In Bacillus anthracis (strain A0248), this protein is ATP-dependent dethiobiotin synthetase BioD.